A 100-amino-acid polypeptide reads, in one-letter code: Urease subunit gamma (100 aa).

It belongs to the urease gamma subunit family. As to quaternary structure, heterotrimer of UreA (gamma), UreB (beta) and UreC (alpha) subunits. Three heterotrimers associate to form the active enzyme.

It is found in the cytoplasm. It catalyses the reaction urea + 2 H2O + H(+) = hydrogencarbonate + 2 NH4(+). Its pathway is nitrogen metabolism; urea degradation; CO(2) and NH(3) from urea (urease route): step 1/1. The chain is Urease subunit gamma from Pseudomonas fluorescens (strain ATCC BAA-477 / NRRL B-23932 / Pf-5).